The primary structure comprises 386 residues: Patatin group M-1 (386 aa).

A signal peptide spans 1–23 (MATTKSFLILFFMILATTSSTCA). A PNPLA domain is found at 32–229 (LSIDGGGIKG…TVGDPALLSL (198 aa)). A GXGXXG motif is present at residues 36 to 41 (GGGIKG). Positions 75-79 (GTSTG) match the GXSXG motif. The active-site Nucleophile is S77. N-linked (GlcNAc...) asparagine glycosylation occurs at N115. Residue D215 is the Proton acceptor of the active site. The DGA/G motif lies at 215 to 217 (DGG).

Belongs to the patatin family. Tuber.

The protein localises to the vacuole. In terms of biological role, probable lipolytic acyl hydrolase (LAH), an activity which is thought to be involved in the response of tubers to pathogens. The chain is Patatin group M-1 from Solanum tuberosum (Potato).